The sequence spans 952 residues: UvrABC system protein A (952 aa).

31 to 38 is a binding site for ATP; it reads GVSGSGKS. The segment at 253 to 280 adopts a C4-type zinc-finger fold; the sequence is CPEHGSVLEELEPRIFSFNSPYGACPAC. ABC transporter domains are found at residues 309–591 and 611–938; these read WSRG…PQSL and GNGK…AFLA. 643-650 is a binding site for ATP; that stretch reads GPSGSGKS. The C4-type zinc finger occupies 742 to 768; it reads CEACGGDGTVKIEMLFLPDLYVPCEVC.

This sequence belongs to the ABC transporter superfamily. UvrA family. In terms of assembly, forms a heterotetramer with UvrB during the search for lesions.

The protein localises to the cytoplasm. Its function is as follows. The UvrABC repair system catalyzes the recognition and processing of DNA lesions. UvrA is an ATPase and a DNA-binding protein. A damage recognition complex composed of 2 UvrA and 2 UvrB subunits scans DNA for abnormalities. When the presence of a lesion has been verified by UvrB, the UvrA molecules dissociate. In Thermus thermophilus (strain ATCC 27634 / DSM 579 / HB8), this protein is UvrABC system protein A.